The primary structure comprises 448 residues: MSQSTATYINVIGAGLAGSEAAYQIAKRGIPVKLYEMRGVKATPQHKTTNFAELVCSNSFRGDSLTNAVGLLKEEMRRLDSIIMRNGEANRVPAGGAMAVDREGYAKSVTAELENHPLIEVIRDEITEIPNDAITVIATGPLTSDALAEKIHAVNGGDGFYFYDAAAPIIDKSTIDMSKVYLKSRYDKGEAAYLNCPMTKEEFMAFHEALTTAEEAPLNSFEKEKYFEGCMPIEVMAKRGIKTMLYGPMKPVGLEYPDDYTGPRDGEFKTPYAVVQLRQDNAAGSLYNIVGFQTHLKWGEQKRVFQMIPGLENAEFVRYGVMHRNSYMDSPNLLTETFQSRSNPNLFFAGQMTGVEGYVESAASGLVAGINAARLFKREEALIFPQTTAIGSLPHYVTHADSKHFQPMNVNFGIIKELEGPRIRDKKERYEAIASRALADLDTCLALL.

FAD is bound at residue 13-18 (GAGLAG).

Belongs to the MnmG family. TrmFO subfamily. FAD is required as a cofactor.

Its subcellular location is the cytoplasm. The catalysed reaction is uridine(54) in tRNA + (6R)-5,10-methylene-5,6,7,8-tetrahydrofolate + NADH + H(+) = 5-methyluridine(54) in tRNA + (6S)-5,6,7,8-tetrahydrofolate + NAD(+). It catalyses the reaction uridine(54) in tRNA + (6R)-5,10-methylene-5,6,7,8-tetrahydrofolate + NADPH + H(+) = 5-methyluridine(54) in tRNA + (6S)-5,6,7,8-tetrahydrofolate + NADP(+). Catalyzes the folate-dependent formation of 5-methyl-uridine at position 54 (M-5-U54) in all tRNAs. The sequence is that of Methylenetetrahydrofolate--tRNA-(uracil-5-)-methyltransferase TrmFO from Streptococcus pyogenes serotype M5 (strain Manfredo).